The sequence spans 498 residues: MMLSSTSLYAAIDLGSNSFHMLVVREVAGSIQTLARIKRKVRLAAGLDTQNHLSQEAMERGWQCLKLFSERLQDIPLDQIRVVATATLRLASNAEEFLQTATEILGCPIQVISGEEEARLIYHGVAHTTGGPEQRLVVDIGGGSTELVTGNGAQANILVSLPMGCVTWLERYFSDRNLAKDNFDRSESAAREMLKPVAQRFREHGWQICVGASGTVQALQEIMVAQGMDELITLAKLQQLKQRAIQCGKLEELEIPGLTLERALVFPSGLSILIAIFQELAIESMTLAGGALREGLVYGMLHLPVEQDIRSRTVRNIQRRYLLDTEQAKRVSKLADNFLLQVEKEWRLDSRCRELLQNACLIHEIGLSIDFKRAPQHAAYLIRNLDLPGFTPAQKLLLAALLQNQSDTLDLSLLNQQNALPVDMAQHLCRLLRLAIIFSSRRRDDTLPAVRLRANGETLYVLLPHGWLQQHPYRAEALEQESHWQSYVQWPLLLEEFN.

The protein belongs to the GppA/Ppx family. GppA subfamily.

It carries out the reaction guanosine 3'-diphosphate 5'-triphosphate + H2O = guanosine 3',5'-bis(diphosphate) + phosphate + H(+). It functions in the pathway purine metabolism; ppGpp biosynthesis; ppGpp from GTP: step 2/2. Functionally, catalyzes the conversion of pppGpp to ppGpp. Guanosine pentaphosphate (pppGpp) is a cytoplasmic signaling molecule which together with ppGpp controls the 'stringent response', an adaptive process that allows bacteria to respond to amino acid starvation, resulting in the coordinated regulation of numerous cellular activities. This chain is Guanosine-5'-triphosphate,3'-diphosphate pyrophosphatase, found in Yersinia enterocolitica serotype O:8 / biotype 1B (strain NCTC 13174 / 8081).